Consider the following 564-residue polypeptide: uncharacterized protein (564 aa).

The next 8 membrane-spanning stretches (helical) occupy residues 12–32 (TYYLWIALFLLLLYVSPLFIL), 97–119 (MTAYAISQTVTRVVAFFGMYVLL), 139–161 (AFALTPFWPSGMLSTLGYPLALW), 188–208 (FVLGFFFFLAGMACFWLYDAI), 213–233 (WNLMFLGSIAFMTSIYLFVEY), 277–297 (MTVHTVVILPILMVVFAALLF), 306–326 (NVYLFLCVLNYGLSLWYAFWF), and 348–368 (FHFLRPLVIYVSFALALYLIW).

The protein resides in the cell membrane. This is an uncharacterized protein from Bacillus subtilis (strain 168).